A 199-amino-acid polypeptide reads, in one-letter code: Protein GrpE (199 aa).

Residues 1 to 24 (MSKQNKKDWKKFRDEHKEEHKVEN) are compositionally biased toward basic and acidic residues. The interval 1 to 52 (MSKQNKKDWKKFRDEHKEEHKVENEILEEETDEESQHQEPALGHPSYTALEE) is disordered.

It belongs to the GrpE family. In terms of assembly, homodimer.

Its subcellular location is the cytoplasm. Participates actively in the response to hyperosmotic and heat shock by preventing the aggregation of stress-denatured proteins, in association with DnaK and GrpE. It is the nucleotide exchange factor for DnaK and may function as a thermosensor. Unfolded proteins bind initially to DnaJ; upon interaction with the DnaJ-bound protein, DnaK hydrolyzes its bound ATP, resulting in the formation of a stable complex. GrpE releases ADP from DnaK; ATP binding to DnaK triggers the release of the substrate protein, thus completing the reaction cycle. Several rounds of ATP-dependent interactions between DnaJ, DnaK and GrpE are required for fully efficient folding. This chain is Protein GrpE, found in Legionella pneumophila (strain Lens).